Reading from the N-terminus, the 1177-residue chain is DNA-directed RNA polymerase subunit beta (1177 aa).

Positions 1–36 (MEGCILADSRQSKTAASPSPSRPQSSSNNSVPGAPN) are disordered. The segment covering 17–32 (SPSPSRPQSSSNNSVP) has biased composition (low complexity).

Belongs to the RNA polymerase beta chain family. In terms of assembly, the RNAP catalytic core consists of 2 alpha, 1 beta, 1 beta' and 1 omega subunit. When a sigma factor is associated with the core the holoenzyme is formed, which can initiate transcription.

It carries out the reaction RNA(n) + a ribonucleoside 5'-triphosphate = RNA(n+1) + diphosphate. Functionally, DNA-dependent RNA polymerase catalyzes the transcription of DNA into RNA using the four ribonucleoside triphosphates as substrates. The chain is DNA-directed RNA polymerase subunit beta from Mycobacterium tuberculosis (strain ATCC 25177 / H37Ra).